We begin with the raw amino-acid sequence, 402 residues long: Acetate kinase (402 aa).

Asn-7 is a binding site for Mg(2+). Lys-14 lines the ATP pocket. Arg-95 contributes to the substrate binding site. Asp-152 functions as the Proton donor/acceptor in the catalytic mechanism. Residues His-212 to Gly-216, Asp-286 to Arg-288, and Gly-334 to Asn-338 contribute to the ATP site. Glu-388 provides a ligand contact to Mg(2+).

This sequence belongs to the acetokinase family. Homodimer. Mg(2+) is required as a cofactor. Mn(2+) serves as cofactor.

It is found in the cytoplasm. It catalyses the reaction acetate + ATP = acetyl phosphate + ADP. It participates in metabolic intermediate biosynthesis; acetyl-CoA biosynthesis; acetyl-CoA from acetate: step 1/2. Its function is as follows. Catalyzes the formation of acetyl phosphate from acetate and ATP. Can also catalyze the reverse reaction. The chain is Acetate kinase from Nitratidesulfovibrio vulgaris (strain ATCC 29579 / DSM 644 / CCUG 34227 / NCIMB 8303 / VKM B-1760 / Hildenborough) (Desulfovibrio vulgaris).